We begin with the raw amino-acid sequence, 868 residues long: MRVHYLWLLLILGHVASARYSSANDWTVDHPQTLFAWEGACIRIPCKYKTPLPKARLDNILLFQNYEFDKATKKFTGTVLYNATKTEKDPESELYLSKQGRVTFLGNRIDNCTLKIHPIRANDSGNLGLRMTAGTERWMEPIHLNVSEKPFQPYIQMPSEIRESQSVTLTCGLNFSCFGYDILLKWFLEDSEITSITSSVTSITSSVTSSIKNVYTESKLTFQPKWTDHGKSVKCQVQHSSKVLSERTVRLDVKYTPKLEIKVNPTEVEKNNSVTMTCRVNSSNPKLRTVAVSWFKDGRPLEDQELEQEQQMSKLILHSVTKDMRGKYRCQASNDIGPGESEEVELTVHYAPEPSRVHIYPSPAEEGQSVELICESLASPSATNYTWYHNRKPIPGDTQEKLRIPKVSPWHAGNYSCLAENRLGHGKIDQEAKLDVHYAPKAVTTVIQSFTPILEGDSVTLVCRYNSSNPDVTSYRWNPQGSGSVLKPGVLRIQKVTWDSMPVSCAACNHKCSWALPVILNVHYAPRDVKVLKVSPASEIRAGQRVLLQCDFAESNPAEVRFFWKKNGSLVQEGRYLSFGSVSPEDSGNYNCMVNNSIGETLSQAWNLQVLYAPRRLRVSISPGDHVMEGKKATLSCESDANPPISQYTWFDSSGQDLHSSGQKLRLEPLEVQHTGSYRCKGTNGIGTGESPPSTLTVYYSPETIGKRVALGLGFCLTICILAIWGMKIQKKWKQNRSQQGLQENSSGQSFFVRNKKARRTPLSEGPQSQGCYNPAMDDTVSYAILRFPESDTHNTGDAGTPATQAPPPNNSDSVTYSVIQKRPMGDYENVNPSCPEDESIHYSELVQFGAGKRPQAKEDVDYVTLKH.

The signal sequence occupies residues 1 to 21; it reads MRVHYLWLLLILGHVASARYS. An Ig-like V-type domain is found at 22-148; the sequence is SANDWTVDHP…MEPIHLNVSE (127 aa). Topologically, residues 22–708 are extracellular; it reads SANDWTVDHP…YYSPETIGKR (687 aa). 3 disulfide bridges follow: C41–C177, C46–C112, and C171–C235. N-linked (GlcNAc...) asparagine glycosylation is found at N111 and N122. An N-acetylneuraminate-binding site is contributed by R130. N-linked (GlcNAc...) asparagine glycosylation is found at N145, N174, N271, N281, N384, N414, N466, N567, and N595. Ig-like C2-type domains follow at residues 153–250, 257–347, 352–435, 440–521, 526–603, and 614–697; these read PYIQ…RTVR, PKLE…VELT, PEPS…AKLD, PKAV…VILN, PRDV…ETLS, and PRRL…STLT. 4 disulfide bridges follow: C278-C330, C374-C417, C463-C505, and C550-C592. C637 and C680 are joined by a disulfide. A helical membrane pass occupies residues 709 to 727; sequence VALGLGFCLTICILAIWGM. The Cytoplasmic portion of the chain corresponds to 728-868; sequence KIQKKWKQNR…EDVDYVTLKH (141 aa). Residues 738–752 show a composition bias toward polar residues; the sequence is SQQGLQENSSGQSFF. The disordered stretch occupies residues 738-772; the sequence is SQQGLQENSSGQSFFVRNKKARRTPLSEGPQSQGC. Phosphoserine is present on residues S746, S747, and S750. The short motif at 781–786 is the ITIM motif 1 element; it reads VSYAIL. Y783 carries the post-translational modification Phosphotyrosine. A disordered region spans residues 790–812; sequence ESDTHNTGDAGTPATQAPPPNNS. Phosphotyrosine is present on residues Y828, Y843, and Y863. 2 consecutive short sequence motifs (ITIM motif) follow at residues 841 to 846 and 861 to 866; these read IHYSEL and VDYVTL.

This sequence belongs to the immunoglobulin superfamily. SIGLEC (sialic acid binding Ig-like lectin) family. In terms of assembly, predominantly monomer of isoform CD22-beta. Also found as heterodimer of isoform CD22-beta and a shorter isoform. Interacts with PTPN6/SHP-1, LYN, SYK, PIK3R1/PIK3R2 and PLCG1 upon phosphorylation. Interacts with GRB2, INPP5D and SHC1 upon phosphorylation. May form a complex with INPP5D/SHIP, GRB2 and SHC1. Phosphorylated on tyrosine residues by LYN. Post-translationally, phosphorylation of Tyr-783 and Tyr-843 are involved in binding to SYK. Phosphorylation of Tyr-828 is involved in binding to GRB2. Phosphorylation of Tyr-863 is involved in binding to SYK, PLCG2 and PIK3R1/PIK3R2. In terms of tissue distribution, B-lymphocytes.

It is found in the cell membrane. Most highly expressed siglec (sialic acid-binding immunoglobulin-like lectin) on B-cells that plays a role in various aspects of B-cell biology including differentiation, antigen presentation, and trafficking to bone marrow. Binds to alpha 2,6-linked sialic acid residues of surface molecules such as CD22 itself, CD45 and IgM in a cis configuration. Can also bind to ligands on other cells as an adhesion molecule in a trans configuration. Acts as an inhibitory coreceptor on the surface of B-cells and inhibits B-cell receptor induced signaling, characterized by inhibition of the calcium mobilization and cellular activation. Mechanistically, the immunoreceptor tyrosine-based inhibitory motif domain is phosphorylated by the Src kinase LYN, which in turn leads to the recruitment of the protein tyrosine phosphatase 1/PTPN6, leading to the negative regulation of BCR signaling. If this negative signaling from is of sufficient strength, apoptosis of the B-cell can be induced. The chain is B-cell receptor CD22 from Mus musculus (Mouse).